The chain runs to 885 residues: DNA mismatch repair protein MutS (885 aa).

626-633 lines the ATP pocket; sequence GPNMGGKS.

Belongs to the DNA mismatch repair MutS family.

Its function is as follows. This protein is involved in the repair of mismatches in DNA. It is possible that it carries out the mismatch recognition step. This protein has a weak ATPase activity. In Burkholderia cenocepacia (strain ATCC BAA-245 / DSM 16553 / LMG 16656 / NCTC 13227 / J2315 / CF5610) (Burkholderia cepacia (strain J2315)), this protein is DNA mismatch repair protein MutS.